The primary structure comprises 466 residues: Ornithine decarboxylase (466 aa).

At K116 the chain carries N6-(pyridoxal phosphate)lysine. Pyridoxal 5'-phosphate contacts are provided by residues S247, G286, and 318 to 321 (EPGR). 362–363 (FD) contacts substrate. C411 serves as the catalytic Proton donor; shared with dimeric partner. Residue D412 coordinates substrate. Y441 is a binding site for pyridoxal 5'-phosphate.

It belongs to the Orn/Lys/Arg decarboxylase class-II family. In terms of assembly, homodimer. Only the dimer is catalytically active, as the active sites are constructed of residues from both monomers. The cofactor is pyridoxal 5'-phosphate.

The protein localises to the cytoplasm. The enzyme catalyses L-ornithine + H(+) = putrescine + CO2. It participates in amine and polyamine biosynthesis; putrescine biosynthesis via L-ornithine pathway; putrescine from L-ornithine: step 1/1. With respect to regulation, inhibited by antizyme (AZ) OAZ1 in response to polyamine levels. AZ inhibits the assembly of the functional homodimer by binding to ODC monomers and targeting them for ubiquitin-independent proteolytic destruction by the 26S proteasome. Catalyzes the first and rate-limiting step of polyamine biosynthesis that converts ornithine into putrescine, which is the precursor for the polyamines, spermidine and spermine. Polyamines are essential for cell proliferation and are implicated in cellular processes, ranging from DNA replication to apoptosis. The polypeptide is Ornithine decarboxylase (Saccharomyces cerevisiae (strain ATCC 204508 / S288c) (Baker's yeast)).